The following is a 236-amino-acid chain: Small ribosomal subunit protein uS2c (236 aa).

It belongs to the universal ribosomal protein uS2 family.

Its subcellular location is the plastid. The protein localises to the chloroplast. This Lemna minor (Common duckweed) protein is Small ribosomal subunit protein uS2c (rps2).